The following is a 78-amino-acid chain: Probable [Fe-S]-dependent transcriptional repressor (78 aa).

Residues Cys56, Cys61, Cys64, and Cys70 each contribute to the iron-sulfur cluster site.

Belongs to the FeoC family.

Functionally, may function as a transcriptional regulator that controls feoABC expression. This Enterobacter sp. (strain 638) protein is Probable [Fe-S]-dependent transcriptional repressor.